Reading from the N-terminus, the 248-residue chain is Small ribosomal subunit protein uS2 (248 aa).

Belongs to the universal ribosomal protein uS2 family.

In Herminiimonas arsenicoxydans, this protein is Small ribosomal subunit protein uS2.